The following is a 296-amino-acid chain: 5'-3' exonuclease (296 aa).

The 88-residue stretch at 175 to 262 (VMPKALIDIK…VPLACTLKDA (88 aa)) folds into the 5'-3' exonuclease domain.

Functionally, 5'-3' exonuclease acting preferentially on double-stranded DNA. This Bacillus subtilis (strain 168) protein is 5'-3' exonuclease (ypcP).